The sequence spans 876 residues: Alanine--tRNA ligase (876 aa).

N6-acetyllysine is present on Lys-74. His-564, His-568, Cys-666, and His-670 together coordinate Zn(2+).

This sequence belongs to the class-II aminoacyl-tRNA synthetase family. Homotetramer. Requires Zn(2+) as cofactor.

The protein localises to the cytoplasm. It catalyses the reaction tRNA(Ala) + L-alanine + ATP = L-alanyl-tRNA(Ala) + AMP + diphosphate. Its function is as follows. Catalyzes the attachment of alanine to tRNA(Ala) in a two-step reaction: alanine is first activated by ATP to form Ala-AMP and then transferred to the acceptor end of tRNA(Ala). Also edits incorrectly charged Ser-tRNA(Ala) and Gly-tRNA(Ala) via its editing domain. In Shigella sonnei (strain Ss046), this protein is Alanine--tRNA ligase.